Here is a 647-residue protein sequence, read N- to C-terminus: 2',3'-cyclic-nucleotide 2'-phosphodiesterase/3'-nucleotidase (647 aa).

A signal peptide spans 1-19 (MIKFSATLLATLIAASVNA). Positions 31, 33, 76, 116, 225, 257, and 259 each coordinate a divalent metal cation. Substrate is bound by residues tyrosine 440 and 544–550 (YRAYGGK).

Belongs to the 5'-nucleotidase family. The cofactor is a divalent metal cation.

It localises to the periplasm. The enzyme catalyses a nucleoside 2',3'-cyclic phosphate + H2O = a nucleoside 3'-phosphate + H(+). It carries out the reaction a ribonucleoside 3'-phosphate + H2O = a ribonucleoside + phosphate. This bifunctional enzyme catalyzes two consecutive reactions during ribonucleic acid degradation. Converts a 2',3'-cyclic nucleotide to a 3'-nucleotide and then the 3'-nucleotide to the corresponding nucleoside and phosphate. The chain is 2',3'-cyclic-nucleotide 2'-phosphodiesterase/3'-nucleotidase (cpdB) from Salmonella typhimurium (strain LT2 / SGSC1412 / ATCC 700720).